A 138-amino-acid polypeptide reads, in one-letter code: Large ribosomal subunit protein eL32 (138 aa).

The protein belongs to the eukaryotic ribosomal protein eL32 family.

The sequence is that of Large ribosomal subunit protein eL32 (rpl32e) from Saccharolobus solfataricus (strain ATCC 35092 / DSM 1617 / JCM 11322 / P2) (Sulfolobus solfataricus).